A 601-amino-acid polypeptide reads, in one-letter code: Aspartate--tRNA(Asp/Asn) ligase (601 aa).

Glu177 lines the L-aspartate pocket. The interval 201-204 (QLFK) is aspartate. Arg223 lines the L-aspartate pocket. ATP is bound by residues 223 to 225 (RDE) and Gln232. His455 contributes to the L-aspartate binding site. Position 489 (Glu489) interacts with ATP. Arg496 is an L-aspartate binding site. Residue 541–544 (GWDR) coordinates ATP. A disordered region spans residues 568-601 (VDPLTDAPAPIPLEQRRETGVDFKPKKKTDESAV). Residues 581-601 (EQRRETGVDFKPKKKTDESAV) show a composition bias toward basic and acidic residues.

The protein belongs to the class-II aminoacyl-tRNA synthetase family. Type 1 subfamily. Homodimer.

It localises to the cytoplasm. The enzyme catalyses tRNA(Asx) + L-aspartate + ATP = L-aspartyl-tRNA(Asx) + AMP + diphosphate. In terms of biological role, aspartyl-tRNA synthetase with relaxed tRNA specificity since it is able to aspartylate not only its cognate tRNA(Asp) but also tRNA(Asn). Reaction proceeds in two steps: L-aspartate is first activated by ATP to form Asp-AMP and then transferred to the acceptor end of tRNA(Asp/Asn). The chain is Aspartate--tRNA(Asp/Asn) ligase from Corynebacterium diphtheriae (strain ATCC 700971 / NCTC 13129 / Biotype gravis).